A 262-amino-acid polypeptide reads, in one-letter code: MKFLALALTILLAAGTQAFPMQADAPSQLEHVKAALSMYIAQVKLTAQRSIDLLDDTEYKEYKMQLTQSLDNLQQYADATSQSLAPYSEAFGTQLTDATAAVRAEVMKDVEELRSQLEPKRAELKEVLDKHIDEYRKKLEPLIKEHIELRRTEMEAFRAKMEPIVEELRAKVAINVEETKTKLMPIVEIVRAKLTERLEELRTLAAPYAEEYKEQMIKAVGEVREKVSPLSEDFKGQVGPAAEQAKQKLLAFYETISQAMKA.

The N-terminal stretch at 1 to 18 (MKFLALALTILLAAGTQA) is a signal peptide. The 3 X approximate tandem repeats stretch occupies residues 32 to 63 (VKAALSMYIAQVKLTAQRSIDLLDDTEYKEYK). 2 repeat units span residues 64–85 (MQLT…QSLA) and 87–107 (YSEA…AEVM). A 10 X approximate tandem repeats region spans residues 64–262 (MQLTQSLDNL…YETISQAMKA (199 aa)). The 3; half-length repeat unit spans residues 108 to 118 (KDVEELRSQLE). 5 consecutive repeat copies span residues 119 to 140 (PKRA…KKLE), 141 to 162 (PLIK…AKME), 163 to 184 (PIVE…TKLM), 185 to 206 (PIVE…TLAA), and 207 to 228 (PYAE…EKVS). One copy of the 9; half-length repeat lies at 229–239 (PLSEDFKGQVG). Repeat 10 spans residues 240–262 (PAAEQAKQKLLAFYETISQAMKA).

The protein belongs to the apolipoprotein A1/A4/E family.

It localises to the secreted. Its function is as follows. Participates in the reverse transport of cholesterol from tissues to the liver for excretion by promoting cholesterol efflux from tissues and by acting as a cofactor for the lecithin cholesterol acyltransferase (LCAT). The protein is Apolipoprotein A-I-1 of Oncorhynchus mykiss (Rainbow trout).